The sequence spans 427 residues: Trigger factor (427 aa).

Positions 163-248 (GDTVVIDFVG…IHEVKAKEVP (86 aa)) constitute a PPIase FKBP-type domain.

This sequence belongs to the FKBP-type PPIase family. Tig subfamily.

The protein localises to the cytoplasm. The catalysed reaction is [protein]-peptidylproline (omega=180) = [protein]-peptidylproline (omega=0). Its function is as follows. Involved in protein export. Acts as a chaperone by maintaining the newly synthesized protein in an open conformation. Functions as a peptidyl-prolyl cis-trans isomerase. The polypeptide is Trigger factor (Streptococcus suis (strain 05ZYH33)).